Here is a 200-residue protein sequence, read N- to C-terminus: Urease accessory protein UreE (200 aa).

Residues 171–200 (HHGHAHPHPHDHDHQHGPGCAHGRHGHDHH) form a disordered region.

Belongs to the UreE family.

It localises to the cytoplasm. Involved in urease metallocenter assembly. Binds nickel. Probably functions as a nickel donor during metallocenter assembly. This is Urease accessory protein UreE from Burkholderia vietnamiensis (strain G4 / LMG 22486) (Burkholderia cepacia (strain R1808)).